A 415-amino-acid chain; its full sequence is Camphor 5-monooxygenase (415 aa).

Position 358 (Cys-358) interacts with heme.

It belongs to the cytochrome P450 family. Heme is required as a cofactor.

It is found in the cytoplasm. The enzyme catalyses 2 reduced [2Fe-2S]-[putidaredoxin] + (1R,4R)-camphor + O2 + 2 H(+) = (1R,4R,5R)-5-hydroxycamphor + 2 oxidized [2Fe-2S]-[putidaredoxin] + H2O. It participates in terpene metabolism; (R)-camphor degradation. Its function is as follows. Involved in a camphor oxidation system. The polypeptide is Camphor 5-monooxygenase (camC) (Pseudomonas putida (Arthrobacter siderocapsulatus)).